The following is a 203-amino-acid chain: High-molecular weight cobalt-containing nitrile hydratase subunit alpha (203 aa).

Positions 102, 105, 106, and 107 each coordinate Co(3+).

The protein belongs to the nitrile hydratase subunit alpha family. As to quaternary structure, heterodimer of an alpha and a beta chain. It depends on Co(3+) as a cofactor.

It catalyses the reaction an aliphatic primary amide = an aliphatic nitrile + H2O. In terms of biological role, NHase catalyzes the hydration of various nitrile compounds to the corresponding amides. The sequence is that of High-molecular weight cobalt-containing nitrile hydratase subunit alpha (nhhA) from Rhodococcus rhodochrous.